Reading from the N-terminus, the 331-residue chain is Beta-ketoacyl-[acyl-carrier-protein] synthase III (331 aa).

Catalysis depends on residues C113 and H253. The interval 254 to 258 (QANTR) is ACP-binding. Residue N283 is part of the active site.

Belongs to the thiolase-like superfamily. FabH family. Homodimer.

It is found in the cytoplasm. The enzyme catalyses malonyl-[ACP] + acetyl-CoA + H(+) = 3-oxobutanoyl-[ACP] + CO2 + CoA. The protein operates within lipid metabolism; fatty acid biosynthesis. Catalyzes the condensation reaction of fatty acid synthesis by the addition to an acyl acceptor of two carbons from malonyl-ACP. Catalyzes the first condensation reaction which initiates fatty acid synthesis and may therefore play a role in governing the total rate of fatty acid production. Possesses both acetoacetyl-ACP synthase and acetyl transacylase activities. Its substrate specificity determines the biosynthesis of branched-chain and/or straight-chain of fatty acids. This is Beta-ketoacyl-[acyl-carrier-protein] synthase III from Desulfitobacterium hafniense (strain DSM 10664 / DCB-2).